The following is a 353-amino-acid chain: (S)-8-amino-7-oxononanoate synthase BioU (353 aa).

10–14 (GTGGI) is an NAD(+) binding site. Lysine 147 serves as the catalytic Nucleophile. Residue lysine 147 is modified to Allysine. 214 to 215 (GT) contacts NAD(+). Residue glutamate 218 is the Proton acceptor of the active site. Histidine 222 functions as the Proton donor and proton acceptor in the catalytic mechanism.

The protein belongs to the BioU family. Monomer.

The enzyme catalyses (8S)-8-amino-7-oxononanoate + L-lysyl-[protein] + CO2 = (S)-2-amino-6-oxohexanoyl-[protein] + (7R,8S)-8-amino-7-(carboxyamino)nonanoate + 2 H(+). It carries out the reaction (8S)-8-amino-7-oxononanoate + L-lysyl-[protein] + NADPH + H(+) = N(6)-[(2S,3R)-2-amino-8-carboxyoctan-3-yl]-L-lysyl-[protein] + NADP(+) + H2O. The catalysed reaction is N(6)-[(2S,3R)-2-amino-8-carboxyoctan-3-yl]-L-lysyl-[protein] + CO2 + NADP(+) + H2O = (S)-2-amino-6-oxohexanoyl-[protein] + (7R,8S)-8-amino-7-(carboxyamino)nonanoate + NADPH + 3 H(+). It catalyses the reaction (8S)-8-amino-7-oxononanoate + L-lysyl-[protein] + NADH + H(+) = N(6)-[(2S,3R)-2-amino-8-carboxyoctan-3-yl]-L-lysyl-[protein] + NAD(+) + H2O. The enzyme catalyses N(6)-[(2S,3R)-2-amino-8-carboxyoctan-3-yl]-L-lysyl-[protein] + CO2 + NAD(+) + H2O = (S)-2-amino-6-oxohexanoyl-[protein] + (7R,8S)-8-amino-7-(carboxyamino)nonanoate + NADH + 3 H(+). The protein operates within cofactor biosynthesis; biotin biosynthesis. Its function is as follows. A 'suicide' enzyme that participates in biotin synthesis. Catalyzes the formation of (S)-8-amino-7-oxononanoate (DAN-carbamic acid) from (7R,8S)-8-amino-7-(carboxyamino)nonanoate (DAN), a function equivalent to the cannonical BioA reaction and the first half-reaction of BioD. The cellular requirement for biotin is thought be low enough that this single turnover enzyme supplies a sufficient amount of the cofactor. Overall it catalyzes three reactions: formation of a covalent linkage with 8-amino-7-oxononanoate to yield a BioU-DAN conjugate at the epsilon-amino group of Lys124 of BioU using NAD(P)H, carboxylation of the conjugate to form BioU-DAN-carbamic acid, and release of DAN-carbamic acid using NAD(P)+. Complements a bioA deletion in E.coli. The chain is (S)-8-amino-7-oxononanoate synthase BioU from Haloferax mediterranei (strain ATCC 33500 / DSM 1411 / JCM 8866 / NBRC 14739 / NCIMB 2177 / R-4) (Halobacterium mediterranei).